Here is a 265-residue protein sequence, read N- to C-terminus: Thiamine thiazole synthase (265 aa).

NAD(+) is bound by residues A43, 62–63 (ER), G70, V134, and 162–164 (HVD). 2 residues coordinate Fe cation: D164 and H179. M229 contacts NAD(+). Position 239 (R239) interacts with glycine.

Belongs to the THI4 family. Homooctamer; tetramer of dimers. Requires Fe(2+) as cofactor.

It carries out the reaction hydrogen sulfide + glycine + NAD(+) = ADP-5-ethyl-4-methylthiazole-2-carboxylate + nicotinamide + 3 H2O + H(+). It participates in cofactor biosynthesis; thiamine diphosphate biosynthesis. In terms of biological role, involved in the biosynthesis of the thiazole moiety of thiamine. Catalyzes the conversion of NAD and glycine to adenosine diphosphate 5-(2-hydroxyethyl)-4-methylthiazole-2-carboxylate (ADT), an adenylated thiazole intermediate, using free sulfide as a source of sulfur. This Sulfolobus acidocaldarius (strain ATCC 33909 / DSM 639 / JCM 8929 / NBRC 15157 / NCIMB 11770) protein is Thiamine thiazole synthase.